A 718-amino-acid polypeptide reads, in one-letter code: Peroxisomal bifunctional enzyme (718 aa).

Residues 1-280 form an enoyl-CoA hydratase / isomerase region; the sequence is MAEYLRLPHS…FAEKSANKWS (280 aa). Lysine 38 carries the N6-succinyllysine modification. Residue glycine 99 coordinates substrate. An N6-acetyllysine; alternate mark is found at lysine 163 and lysine 172. Residues lysine 163 and lysine 172 each carry the N6-succinyllysine; alternate modification. The residue at position 181 (lysine 181) is an N6-succinyllysine. N6-acetyllysine; alternate occurs at positions 189 and 217. An N6-succinyllysine; alternate mark is found at lysine 189 and lysine 217. At lysine 240 the chain carries N6-succinyllysine. N6-acetyllysine is present on lysine 248. Lysine 252 is modified (N6-succinyllysine). At lysine 274 the chain carries N6-acetyllysine; alternate. Residue lysine 274 is modified to N6-succinyllysine; alternate. 3 positions are modified to N6-succinyllysine: lysine 278, lysine 288, and lysine 329. The interval 281 to 567 is 3-hydroxyacyl-CoA dehydrogenase; sequence TPSGASWKTA…DMLCEAGRFG (287 aa). An N6-acetyllysine mark is found at lysine 344, lysine 348, lysine 355, and lysine 459. Position 527 is an N6-succinyllysine (lysine 527). Threonine 543 carries the post-translational modification Phosphothreonine. Lysine 572 carries the post-translational modification N6-succinyllysine. Lysine 579, lysine 586, and lysine 705 each carry N6-acetyllysine; alternate. N6-succinyllysine; alternate is present on residues lysine 579, lysine 586, and lysine 705. The Microbody targeting signal motif lies at 716–718; that stretch reads SKL. Lysine 717 carries the post-translational modification N6-succinyllysine.

The protein in the N-terminal section; belongs to the enoyl-CoA hydratase/isomerase family. It in the C-terminal section; belongs to the 3-hydroxyacyl-CoA dehydrogenase family. Monomer. Acetylated, leading to enhanced enzyme activity. Acetylation is enhanced by up to 80% after treatment either with trichostin A (TCA) or with nicotinamide (NAM) with highest increase on Lys-344. Acetylation and enzyme activity increased by about 1.5% on addition of fatty acids.

The protein localises to the peroxisome. It carries out the reaction a (3S)-3-hydroxyacyl-CoA = a (2E)-enoyl-CoA + H2O. It catalyses the reaction a 4-saturated-(3S)-3-hydroxyacyl-CoA = a (3E)-enoyl-CoA + H2O. The catalysed reaction is a (3Z)-enoyl-CoA = a 4-saturated (2E)-enoyl-CoA. The enzyme catalyses a (3E)-enoyl-CoA = a 4-saturated (2E)-enoyl-CoA. It carries out the reaction a (3S)-3-hydroxyacyl-CoA + NAD(+) = a 3-oxoacyl-CoA + NADH + H(+). It catalyses the reaction (2S,3S)-3-hydroxy-2-methylbutanoyl-CoA = (2E)-2-methylbut-2-enoyl-CoA + H2O. The catalysed reaction is (2E)-dodecenedioyl-CoA + H2O = (3S)-hydroxydodecanedioyl-CoA. The enzyme catalyses (3S)-hydroxydodecanedioyl-CoA + NAD(+) = 3-oxododecanedioyl-CoA + NADH + H(+). It carries out the reaction (2E)-octenedioyl-CoA + H2O = (3S)-hydroxyoctanedioyl-CoA. It catalyses the reaction (3S)-hydroxyoctanedioyl-CoA + NAD(+) = 3-oxooctanedioyl-CoA + NADH + H(+). The catalysed reaction is (2E)-decenedioyl-CoA + H2O = (3S)-hydroxydecanedioyl-CoA. The enzyme catalyses (3S)-hydroxydecanedioyl-CoA + NAD(+) = 3-oxodecanedioyl-CoA + NADH + H(+). It carries out the reaction (2E)-tetradecenedioyl-CoA + H2O = (3S)-hydroxytetradecanedioyl-CoA. It catalyses the reaction (3S)-hydroxytetradecanedioyl-CoA + NAD(+) = 3-oxotetradecanedioyl-CoA + NADH + H(+). The catalysed reaction is (3E,5Z)-tetradecadienoyl-CoA = (2E,5Z)-tetradecadienoyl-CoA. The enzyme catalyses (3E,5Z)-octadienoyl-CoA = (2E,5Z)-octadienoyl-CoA. It carries out the reaction (3S)-hydroxydecanoyl-CoA + NAD(+) = 3-oxodecanoyl-CoA + NADH + H(+). It catalyses the reaction (3E)-decenoyl-CoA = (2E)-decenoyl-CoA. The catalysed reaction is (3Z)-hexenoyl-CoA = (2E)-hexenoyl-CoA. The enzyme catalyses (3E)-hexenoyl-CoA = (2E)-hexenoyl-CoA. It carries out the reaction (3S)-hydroxydecanoyl-CoA = (2E)-decenoyl-CoA + H2O. It catalyses the reaction (3S)-hydroxyhexanoyl-CoA = (2E)-hexenoyl-CoA + H2O. The catalysed reaction is (3S)-hydroxyhexadecanoyl-CoA + NAD(+) = 3-oxohexadecanoyl-CoA + NADH + H(+). The enzyme catalyses (3S)-hydroxyhexadecanoyl-CoA = (2E)-hexadecenoyl-CoA + H2O. It carries out the reaction (2E)-hexadecenedioyl-CoA + H2O = (3S)-hydroxyhexadecanedioyl-CoA. It catalyses the reaction (3S)-hydroxyhexadecanedioyl-CoA + NAD(+) = 3-oxohexadecanedioyl-CoA + NADH + H(+). It participates in lipid metabolism; fatty acid beta-oxidation. With respect to regulation, enzyme activity enhanced by acetylation. Functionally, peroxisomal trifunctional enzyme possessing 2-enoyl-CoA hydratase, 3-hydroxyacyl-CoA dehydrogenase, and delta 3, delta 2-enoyl-CoA isomerase activities. Catalyzes two of the four reactions of the long chain fatty acids peroxisomal beta-oxidation pathway. Can also use branched-chain fatty acids such as 2-methyl-2E-butenoyl-CoA as a substrate, which is hydrated into (2S,3S)-3-hydroxy-2-methylbutanoyl-CoA. Optimal isomerase for 2,5 double bonds into 3,5 form isomerization in a range of enoyl-CoA species. Also able to isomerize both 3-cis and 3-trans double bonds into the 2-trans form in a range of enoyl-CoA species. With HSD17B4, catalyzes the hydration of trans-2-enoyl-CoA and the dehydrogenation of 3-hydroxyacyl-CoA, but with opposite chiral specificity. Regulates the amount of medium-chain dicarboxylic fatty acids which are essential regulators of all fatty acid oxidation pathways. Also involved in the degradation of long-chain dicarboxylic acids through peroxisomal beta-oxidation. In Mus musculus (Mouse), this protein is Peroxisomal bifunctional enzyme.